The chain runs to 486 residues: Ribosomal protein uS12 methylthiotransferase RimO (486 aa).

The 117-residue stretch at 9–125 folds into the MTTase N-terminal domain; sequence RSVALVTLGC…LSSHLEAILH (117 aa). 6 residues coordinate [4Fe-4S] cluster: cysteine 18, cysteine 54, cysteine 88, cysteine 191, cysteine 195, and cysteine 198. Positions 177–408 constitute a Radical SAM core domain; it reads LGSGPWAPVK…RLVEELVTQR (232 aa). In terms of domain architecture, TRAM spans 410 to 482; sequence EERLGEVVEV…GADLLAEPLV (73 aa).

It belongs to the methylthiotransferase family. RimO subfamily. Requires [4Fe-4S] cluster as cofactor.

The protein localises to the cytoplasm. It catalyses the reaction L-aspartate(89)-[ribosomal protein uS12]-hydrogen + (sulfur carrier)-SH + AH2 + 2 S-adenosyl-L-methionine = 3-methylsulfanyl-L-aspartate(89)-[ribosomal protein uS12]-hydrogen + (sulfur carrier)-H + 5'-deoxyadenosine + L-methionine + A + S-adenosyl-L-homocysteine + 2 H(+). Functionally, catalyzes the methylthiolation of an aspartic acid residue of ribosomal protein uS12. The polypeptide is Ribosomal protein uS12 methylthiotransferase RimO (Kineococcus radiotolerans (strain ATCC BAA-149 / DSM 14245 / SRS30216)).